The sequence spans 983 residues: MTAGSTSPRPSARSASGRPKRGALLPTVIAVVVLIALFVGFTQVYTNILWFEQLGYLRVFITRNLAVIGLFVAAALIVAALMFLSLWLAHRHRPRGGEVTDTMRKYQQALDPVRKVVMVAVPLIFGLFAASTVATQWQTVMLFFNQEPFGQTDPQFSMDLGFYVFTLPFLRLLIGFLVTALLLAGVAGLLMHYVYGGIRIHERGITTTRAARVHLGSIVAAFLALQAVNFWLDRYSTLISSSGKWTGAMYTDVNAVIPTKGILAVAALLVAVLFVVAGFIGRWKLPLIGAAMLVVVAVVAGGLYPWAIQRFQVTPTEQALEKEFIQRNITMTRQAYGLDDTQVTPYDATTETEKGALRQDTETTSNIRLLDPNVVSSAFAQLQQFRPYYQFPEMLNVDRYDIDGQSQDTVIATRELNPDQIQGWYNQSVVYTHGYGVVAAYGSRVQSDGKPQFMQAGIPSKGEISDDYEPRIYFGEKSPNYSIVGGAAEDAPLELDRPQTNEGDAEDAKTTFTGNGGPNVGNWFNKLAYSIKFQSTDMLLSDAVRPESQILYDRNPRERVEKVAPYLTVDGKPYPAIVDNKVVWIVDAYTTAASYPYSSPSVLQDATKDTQTAQGTTAALPNERVNYIRNSVKATVNAYDGSVELYAWDDQDPVLKSWQNVFPSTVKPYSEMSADLMAHVRYPEDMFKVQRELLNRYHVTDANSFYANDDVWSVPNDPTQQNRNVSQPPYYLSMRMPGEKEANFSLTSSFIPQQNESGNTRNVMYGYLSANADAGTGKDGVKSENYGKLRLLELPRSSVVPGPGQAQNLFNSDTDVSQELNLLRQGASEVINGNLLTLPAGGGMLYVQPVYVQSSGDAAYPTLRRVLVGFGEKVGFAPTLDGALDEVFGGNSGAKTDTGAGVSEKAAEAAQGGKGKDSTPSPSPSGTPVPRSSSLQEALDTANKAMQDSDKAMKDGDWTKYGEAQDRLKRAIDDAMAQDGATK.

7 consecutive transmembrane segments (helical) span residues 22–42, 67–87, 116–136, 172–192, 213–233, 261–281, and 288–308; these read GALL…VGFT, VIGL…LSLW, VVMV…VATQ, LLIG…LLMH, VHLG…FWLD, GILA…GFIG, and IGAA…PWAI. A disordered region spans residues 893–959; the sequence is GAKTDTGAGV…DKAMKDGDWT (67 aa). Basic and acidic residues predominate over residues 947-959; the sequence is QDSDKAMKDGDWT.

Belongs to the UPF0182 family.

It is found in the cell membrane. The chain is UPF0182 protein KRH_08700 from Kocuria rhizophila (strain ATCC 9341 / DSM 348 / NBRC 103217 / DC2201).